Reading from the N-terminus, the 500-residue chain is Prostacyclin synthase (500 aa).

Residues 1-20 (MSWAVVFGLLAALLLLLLLT) form a helical membrane-spanning segment. Substrate is bound by residues R106, L112, N287, 358 to 359 (TR), and R382. C441 contributes to the heme binding site.

The protein belongs to the cytochrome P450 family. Requires heme as cofactor.

The protein resides in the endoplasmic reticulum membrane. The catalysed reaction is prostaglandin H2 = prostaglandin I2. The enzyme catalyses a hydroperoxyeicosatetraenoate = an oxoeicosatetraenoate + H2O. It carries out the reaction (15S)-hydroperoxy-(5Z,8Z,11Z,13E)-eicosatetraenoate = 15-oxo-(5Z,8Z,11Z,13E)-eicosatetraenoate + H2O. It catalyses the reaction (15S)-hydroperoxy-(5Z,8Z,11Z,13E)-eicosatetraenoate + AH2 = (15S)-hydroxy-(5Z,8Z,11Z,13E)-eicosatetraenoate + A + H2O. Its function is as follows. Catalyzes the biosynthesis and metabolism of eicosanoids. Catalyzes the isomerization of prostaglandin H2 to prostacyclin (= prostaglandin I2), a potent mediator of vasodilation and inhibitor of platelet aggregation. Additionally, displays dehydratase activity, toward hydroperoxyeicosatetraenoates (HPETEs), especially toward (15S)-hydroperoxy-(5Z,8Z,11Z,13E)-eicosatetraenoate (15(S)-HPETE). This chain is Prostacyclin synthase (PTGIS), found in Bos taurus (Bovine).